Reading from the N-terminus, the 170-residue chain is Zinc finger protein 576 (170 aa).

Residues 1 to 29 (MEDPNPEENMKQQDSPKERSPQSPGGNIC) are disordered. Residues 8–20 (ENMKQQDSPKERS) show a composition bias toward basic and acidic residues. 4 consecutive C2H2-type zinc fingers follow at residues 34-57 (PKCT…KREH), 71-93 (FICF…QRSH), 112-134 (FPCP…RQMH), and 143-165 (FACT…YIRH).

The protein belongs to the krueppel C2H2-type zinc-finger protein family.

It is found in the nucleus. Functionally, may be involved in transcriptional regulation. This is Zinc finger protein 576 (ZNF576) from Homo sapiens (Human).